We begin with the raw amino-acid sequence, 374 residues long: Transcription termination factor 1, mitochondrial (374 aa).

The transit peptide at 1–37 (MASRNIWRVRRNFLFDLRGWVPQYSAEVFLKSIPFRP) directs the protein to the mitochondrion. Interaction with DNA regions lie at residues 146-147 (RS), 224-228 (QSTKR), 301-308 (SEKKFNDK), 332-335 (SIHT), and 361-368 (SQRRYEAK).

Belongs to the mTERF family. Monomer. Post-translationally, is a phosphoprotein. While the DNA-binding activity is unaffected by the phosphorylation/dephosphorylation state, only the phosphorylated form of the protein is active for termination activity. Functioning seems to be regulated by phosphorylation.

The protein resides in the mitochondrion. In terms of biological role, transcription termination factor. Binds to a 28 bp region within the tRNA(Leu(uur)) gene at a position immediately adjacent to and downstream of the 16S rRNA gene; this region comprises a tridecamer sequence critical for directing accurate termination. Binds DNA along the major grove and promotes DNA bending and partial unwinding. Promotes base flipping. Transcription termination activity appears to be polarized with highest specificity for transcripts initiated on the light strand. The sequence is that of Transcription termination factor 1, mitochondrial (Mterf1) from Rattus norvegicus (Rat).